The primary structure comprises 169 residues: Ribosome maturation factor RimP (169 aa).

This sequence belongs to the RimP family.

The protein localises to the cytoplasm. Functionally, required for maturation of 30S ribosomal subunits. The polypeptide is Ribosome maturation factor RimP (Koribacter versatilis (strain Ellin345)).